The sequence spans 343 residues: MDIILATGGTGGHIFPAIALAKALKTQGYNCILFTDKKTNKNTDIESYTLPLRRPSSNKFKFFLFLIYSSMLALYQVRKLKPKSVIGFGSYASFPTLLAARVLSIPIILHEQNTVLGRVNRFFFKSAKLIATSFPETKYAEGNKCIFTGNFVDIKAQSHSSTEKILNILVIAGSQGANFFDDVVSSVICDLPIKMKKKIRVTQQCTKKNVNKVKSLYKSEKIDCELSEFFDDMENRLANAHLVISRAGATSIAEITLARRSAIYIPYPYSKDNHQFYNAKYIEDSRAAIIVKQNSEAKKNLTEVLFDLLNNSQKLRDMTNSTEKTGIKNGTTEFVKVIVHRFS.

UDP-N-acetyl-alpha-D-glucosamine-binding positions include T10–G12, N113, S174, and Q275.

This sequence belongs to the glycosyltransferase 28 family. MurG subfamily.

The protein resides in the cell membrane. The enzyme catalyses di-trans,octa-cis-undecaprenyl diphospho-N-acetyl-alpha-D-muramoyl-L-alanyl-D-glutamyl-meso-2,6-diaminopimeloyl-D-alanyl-D-alanine + UDP-N-acetyl-alpha-D-glucosamine = di-trans,octa-cis-undecaprenyl diphospho-[N-acetyl-alpha-D-glucosaminyl-(1-&gt;4)]-N-acetyl-alpha-D-muramoyl-L-alanyl-D-glutamyl-meso-2,6-diaminopimeloyl-D-alanyl-D-alanine + UDP + H(+). The protein operates within cell wall biogenesis; peptidoglycan biosynthesis. In terms of biological role, cell wall formation. Catalyzes the transfer of a GlcNAc subunit on undecaprenyl-pyrophosphoryl-MurNAc-pentapeptide (lipid intermediate I) to form undecaprenyl-pyrophosphoryl-MurNAc-(pentapeptide)GlcNAc (lipid intermediate II). In Wolbachia sp. subsp. Drosophila simulans (strain wRi), this protein is UDP-N-acetylglucosamine--N-acetylmuramyl-(pentapeptide) pyrophosphoryl-undecaprenol N-acetylglucosamine transferase.